A 138-amino-acid chain; its full sequence is Small ribosomal subunit protein uS11 (138 aa).

The protein belongs to the universal ribosomal protein uS11 family. In terms of assembly, part of the 30S ribosomal subunit.

Located on the platform of the 30S subunit. This is Small ribosomal subunit protein uS11 from Pyrobaculum arsenaticum (strain DSM 13514 / JCM 11321 / PZ6).